The sequence spans 294 residues: Elongation factor Ts, mitochondrial 2 (294 aa).

It belongs to the EF-Ts family.

It is found in the mitochondrion. Associates with the EF-Tu.GDP complex and induces the exchange of GDP to GTP. It remains bound to the aminoacyl-tRNA.EF-Tu.GTP complex up to the GTP hydrolysis stage on the ribosome. This is Elongation factor Ts, mitochondrial 2 from Paramecium tetraurelia.